A 324-amino-acid chain; its full sequence is Probable UDP-sugar transporter protein SLC35A4 (324 aa).

The Cytoplasmic segment spans residues 1–18 (MSVEDGGMPGLGRPRQAR). The helical transmembrane segment at 19-39 (WTLMLLLSTAMYGAHAPLLAL) threads the bilayer. The Lumenal segment spans residues 40-52 (CHVDGRVPFRPSS). A helical transmembrane segment spans residues 53–73 (AVLLTELTKLLLCAFSLLVGW). The Cytoplasmic segment spans residues 74–85 (QAWPQGPPPWRQ). A helical membrane pass occupies residues 86 to 106 (AAPFALSALLYGANNNLVIYL). Residues 107-142 (QRYMDPSTYQVLSNLKIGSTAVLYCLCLRHRLSVRQ) lie on the Lumenal side of the membrane. Residues 143-163 (GLALLLLMAAGACYAAGGLQV) traverse the membrane as a helical segment. At 164–180 (PGNTLPSPPPAAAASPM) the chain is on the cytoplasmic side. Residues 181-201 (PLHITPLGLLLLILYCLISGL) form a helical membrane-spanning segment. Topologically, residues 202 to 214 (SSVYTELLMKRQR) are lumenal. Residues 215–235 (LPLALQNLFLYTFGVLLNLGL) form a helical membrane-spanning segment. Over 236 to 250 (HAGGGSGPGLLEGFS) the chain is Cytoplasmic. Residues 251 to 271 (GWAALVVLSQALNGLLMSAVM) form a helical membrane-spanning segment. The Lumenal segment spans residues 272 to 275 (KHGS). The helical transmembrane segment at 276–298 (SITRLFVVSCSLVVNAVLSAVLL) threads the bilayer. At 299–324 (RLQLTAAFFLATLLIGLAMRLYYGSR) the chain is on the cytoplasmic side.

The protein belongs to the nucleotide-sugar transporter family. SLC35A subfamily. As to quaternary structure, found in a complex with SLC35A2 and SLC35A3.

Its subcellular location is the golgi apparatus membrane. The enzyme catalyses CDP-L-ribitol(in) + CDP(out) = CDP-L-ribitol(out) + CDP(in). Mediates the transport of CDP-ribitol. Does not exhibit CMP-sialic acid, UDP-galactose and UDP-N-acetylglucosamine transport activity. The protein is Probable UDP-sugar transporter protein SLC35A4 of Homo sapiens (Human).